The chain runs to 340 residues: UDP-3-O-acylglucosamine N-acyltransferase (340 aa).

His238 serves as the catalytic Proton acceptor.

Belongs to the transferase hexapeptide repeat family. LpxD subfamily. As to quaternary structure, homotrimer.

It catalyses the reaction a UDP-3-O-[(3R)-3-hydroxyacyl]-alpha-D-glucosamine + a (3R)-hydroxyacyl-[ACP] = a UDP-2-N,3-O-bis[(3R)-3-hydroxyacyl]-alpha-D-glucosamine + holo-[ACP] + H(+). The protein operates within bacterial outer membrane biogenesis; LPS lipid A biosynthesis. Catalyzes the N-acylation of UDP-3-O-acylglucosamine using 3-hydroxyacyl-ACP as the acyl donor. Is involved in the biosynthesis of lipid A, a phosphorylated glycolipid that anchors the lipopolysaccharide to the outer membrane of the cell. The polypeptide is UDP-3-O-acylglucosamine N-acyltransferase (Shewanella denitrificans (strain OS217 / ATCC BAA-1090 / DSM 15013)).